Here is a 238-residue protein sequence, read N- to C-terminus: 3-dehydroquinate dehydratase (238 aa).

3-dehydroquinate-binding positions include 35–37 (ELR) and R68. H131 (proton donor/acceptor) is an active-site residue. K158 (schiff-base intermediate with substrate) is an active-site residue. 3-dehydroquinate contacts are provided by R200 and Q223.

This sequence belongs to the type-I 3-dehydroquinase family. In terms of assembly, homodimer.

The enzyme catalyses 3-dehydroquinate = 3-dehydroshikimate + H2O. It participates in metabolic intermediate biosynthesis; chorismate biosynthesis; chorismate from D-erythrose 4-phosphate and phosphoenolpyruvate: step 3/7. Involved in the third step of the chorismate pathway, which leads to the biosynthesis of aromatic amino acids. Catalyzes the cis-dehydration of 3-dehydroquinate (DHQ) and introduces the first double bond of the aromatic ring to yield 3-dehydroshikimate. The sequence is that of 3-dehydroquinate dehydratase from Staphylococcus epidermidis (strain ATCC 35984 / DSM 28319 / BCRC 17069 / CCUG 31568 / BM 3577 / RP62A).